Consider the following 261-residue polypeptide: Glucose 1-dehydrogenase 2 (261 aa).

Valine 11–valine 35 is a binding site for NADP(+). Serine 145 contacts substrate. The active-site Proton acceptor is the tyrosine 158.

This sequence belongs to the short-chain dehydrogenases/reductases (SDR) family. As to quaternary structure, homotetramer.

It catalyses the reaction D-glucose + NAD(+) = D-glucono-1,5-lactone + NADH + H(+). The enzyme catalyses D-glucose + NADP(+) = D-glucono-1,5-lactone + NADPH + H(+). This chain is Glucose 1-dehydrogenase 2 (gdhII), found in Priestia megaterium (Bacillus megaterium).